A 128-amino-acid chain; its full sequence is L-ectoine synthase (128 aa).

It belongs to the ectoine synthase family.

It catalyses the reaction (2S)-4-acetamido-2-aminobutanoate = L-ectoine + H2O. Its pathway is amine and polyamine biosynthesis; ectoine biosynthesis; L-ectoine from L-aspartate 4-semialdehyde: step 3/3. Catalyzes the circularization of gamma-N-acetyl-alpha,gamma-diaminobutyric acid (ADABA) to ectoine (1,4,5,6-tetrahydro-2-methyl-4-pyrimidine carboxylic acid), which is an excellent osmoprotectant. This Vibrio atlanticus (strain LGP32) (Vibrio splendidus (strain Mel32)) protein is L-ectoine synthase.